The primary structure comprises 438 residues: ATP-dependent protease ATPase subunit HslU (438 aa).

Residues V18, 60-65, D252, E317, and R389 contribute to the ATP site; that span reads GVGKTE.

It belongs to the ClpX chaperone family. HslU subfamily. A double ring-shaped homohexamer of HslV is capped on each side by a ring-shaped HslU homohexamer. The assembly of the HslU/HslV complex is dependent on binding of ATP.

It localises to the cytoplasm. Its function is as follows. ATPase subunit of a proteasome-like degradation complex; this subunit has chaperone activity. The binding of ATP and its subsequent hydrolysis by HslU are essential for unfolding of protein substrates subsequently hydrolyzed by HslV. HslU recognizes the N-terminal part of its protein substrates and unfolds these before they are guided to HslV for hydrolysis. The chain is ATP-dependent protease ATPase subunit HslU from Saccharophagus degradans (strain 2-40 / ATCC 43961 / DSM 17024).